The primary structure comprises 118 residues: Large ribosomal subunit protein uL22 (118 aa).

This sequence belongs to the universal ribosomal protein uL22 family. Part of the 50S ribosomal subunit.

This protein binds specifically to 23S rRNA; its binding is stimulated by other ribosomal proteins, e.g. L4, L17, and L20. It is important during the early stages of 50S assembly. It makes multiple contacts with different domains of the 23S rRNA in the assembled 50S subunit and ribosome. Its function is as follows. The globular domain of the protein is located near the polypeptide exit tunnel on the outside of the subunit, while an extended beta-hairpin is found that lines the wall of the exit tunnel in the center of the 70S ribosome. This Leuconostoc citreum (strain KM20) protein is Large ribosomal subunit protein uL22.